The following is a 357-amino-acid chain: Sulfate/thiosulfate import ATP-binding protein CysA (357 aa).

Residues Ile3–Leu237 form the ABC transporter domain. Gly35 to Thr42 contributes to the ATP binding site.

Belongs to the ABC transporter superfamily. Sulfate/tungstate importer (TC 3.A.1.6) family. In terms of assembly, the complex is composed of two ATP-binding proteins (CysA), two transmembrane proteins (CysT and CysW) and a solute-binding protein (CysP).

It localises to the cell membrane. It catalyses the reaction sulfate(out) + ATP + H2O = sulfate(in) + ADP + phosphate + H(+). The enzyme catalyses thiosulfate(out) + ATP + H2O = thiosulfate(in) + ADP + phosphate + H(+). In terms of biological role, part of the ABC transporter complex CysAWTP involved in sulfate/thiosulfate import. Responsible for energy coupling to the transport system. This chain is Sulfate/thiosulfate import ATP-binding protein CysA, found in Halalkalibacterium halodurans (strain ATCC BAA-125 / DSM 18197 / FERM 7344 / JCM 9153 / C-125) (Bacillus halodurans).